Reading from the N-terminus, the 428-residue chain is Enolase 3 (428 aa).

Residue Gln163 participates in (2R)-2-phosphoglycerate binding. The Proton donor role is filled by Glu205. 3 residues coordinate Mg(2+): Asp242, Glu286, and Asp313. Residues Lys338, Arg367, Ser368, and Lys389 each coordinate (2R)-2-phosphoglycerate. Residue Lys338 is the Proton acceptor of the active site.

This sequence belongs to the enolase family. The cofactor is Mg(2+).

The protein resides in the cytoplasm. It is found in the secreted. Its subcellular location is the cell surface. The catalysed reaction is (2R)-2-phosphoglycerate = phosphoenolpyruvate + H2O. It participates in carbohydrate degradation; glycolysis; pyruvate from D-glyceraldehyde 3-phosphate: step 4/5. Its function is as follows. Catalyzes the reversible conversion of 2-phosphoglycerate (2-PG) into phosphoenolpyruvate (PEP). It is essential for the degradation of carbohydrates via glycolysis. The chain is Enolase 3 from Lactobacillus johnsonii (strain CNCM I-12250 / La1 / NCC 533).